A 645-amino-acid chain; its full sequence is Homeobox protein B-H2 (645 aa).

Disordered regions lie at residues 1-50, 86-134, 149-176, 240-259, 265-385, and 553-645; these read MTTM…TTAT, SSGG…QAAL, RERE…AHHP, SHLS…HDER, MLQQ…KART, and GAQQ…ALEV. Residues 18-29 show a composition bias toward low complexity; it reads SAPSATAHHPAA. The segment covering 106 to 121 has biased composition (basic residues); that stretch reads QHHHHHQQQQQHHHHQ. Over residues 122 to 134 the composition is skewed to low complexity; that stretch reads QQQQQQQHQQAAL. Over residues 149–165 the composition is skewed to basic and acidic residues; that stretch reads REREREREREHYRERHS. Over residues 244–253 the composition is skewed to basic residues; that stretch reads HQQHHPHLHH. The segment covering 275 to 316 has biased composition (low complexity); that stretch reads NNNNNNNNSSSASNNNNNNNNSASANSNIISGNSSSSNNNNG. The segment covering 317–328 has biased composition (gly residues); sequence SGNGNMLLGGPG. Residues 329–339 are compositionally biased toward polar residues; sequence SSISGDQASTI. Residues 362 to 377 are compositionally biased toward low complexity; sequence SSANGDSSSHLSLSLS. The homeobox DNA-binding region spans 380 to 439; the sequence is QRKARTAFTDHQLQTLEKSFERQKYLSVQDRMELANKLELSDCQVKTWYQNRRTKWKRQT. The span at 553-574 shows a compositional bias: low complexity; it reads GAQQQQQQPPAASRSPATSQSA. The span at 583–592 shows a compositional bias: polar residues; the sequence is TSSSSRQRLI. Thr593 bears the Phosphothreonine mark. Pro residues predominate over residues 594–603; it reads PSPPLNPGSP. 2 positions are modified to phosphoserine: Ser595 and Ser602. The span at 618–632 shows a compositional bias: basic and acidic residues; sequence DEERDIERERERERE. The segment covering 633–645 has biased composition (acidic residues); the sequence is RDEDDEEELALEV.

This sequence belongs to the Antp homeobox family. In terms of tissue distribution, B-H1 and B-H2 are abundant in the eye-antenna imaginal disk. Expressed in R1 and R6 cells throughout larval stage until 30 hours after puparium formation, at which time expression is seen in the anterior and posterior primary pigment cells. Coexpressed in embryonic glial cells, neurons of the CNS and PNS, most latitudinal anterior cells of the developing notum and the central circular region of the leg and antennal imaginal disk throughout larval development.

It is found in the nucleus. Functionally, B-H1 and B-H2 are regulated by members of the wg signaling pathway; wg and dpp. B-H1 and B-H2 are coexpressed and functionally required in R1 and R6 receptor cells and primary pigment cells for normal eye development. Coexpression is also required for the fate determination of external sensory organs, formation of notal microchaetae, formation of presutural macrochaetae, antennal development and for distal leg morphogenesis; segmentation and specification of tarsal segments 3-5. This chain is Homeobox protein B-H2 (B-H2), found in Drosophila melanogaster (Fruit fly).